We begin with the raw amino-acid sequence, 297 residues long: Urease accessory protein UreD (297 aa).

The segment covering 1 to 18 (MNSSAASPPAVSPHAAPS) has biased composition (low complexity). 2 disordered regions span residues 1-20 (MNSSAASPPAVSPHAAPSRT) and 178-201 (VDQAPGPAPTTDAGTAPAPGPRRR).

The protein belongs to the UreD family. In terms of assembly, ureD, UreF and UreG form a complex that acts as a GTP-hydrolysis-dependent molecular chaperone, activating the urease apoprotein by helping to assemble the nickel containing metallocenter of UreC. The UreE protein probably delivers the nickel.

Its subcellular location is the cytoplasm. Functionally, required for maturation of urease via the functional incorporation of the urease nickel metallocenter. This chain is Urease accessory protein UreD, found in Parafrankia sp. (strain EAN1pec).